The primary structure comprises 148 residues: Probable histone H2A.1 (148 aa).

Residues 1–23 are compositionally biased toward basic residues; sequence MDASTKTKKGAGGRKGGPRKKSV. Disordered regions lie at residues 1-28 and 127-148; these read MDAS…RSTR and KNEK…PKKA. Residues 131-142 are compositionally biased toward low complexity; the sequence is AATTTKSPSKAT. 2 consecutive short sequence motifs (SPKK motif) follow at residues 137–140 and 144–147; these read SPSK and SPKK.

Belongs to the histone H2A family. The nucleosome is a histone octamer containing two molecules each of H2A, H2B, H3 and H4 assembled in one H3-H4 heterotetramer and two H2A-H2B heterodimers. The octamer wraps approximately 147 bp of DNA.

The protein resides in the nucleus. The protein localises to the chromosome. In terms of biological role, core component of nucleosome. Nucleosomes wrap and compact DNA into chromatin, limiting DNA accessibility to the cellular machineries which require DNA as a template. Histones thereby play a central role in transcription regulation, DNA repair, DNA replication and chromosomal stability. DNA accessibility is regulated via a complex set of post-translational modifications of histones, also called histone code, and nucleosome remodeling. This Medicago truncatula (Barrel medic) protein is Probable histone H2A.1.